Here is a 188-residue protein sequence, read N- to C-terminus: MAEIAGNLQRILQSLDRQFAGNKYLQEFERKTGFPKSYAIAGAGVAYLFIIFINVGGVGEILSNFLGFVLPCYYSLHAIKTTTTADDTELLTYWIVFAFFSVIEFWSKAILYWVPFYWFFKTIFLIFIALPQLGGASLIYHRVIAPLTDPYIAAGSQRKASGISSKMEQAAKGASARATGAASHQSSD.

The Cytoplasmic portion of the chain corresponds to 1-35; it reads MAEIAGNLQRILQSLDRQFAGNKYLQEFERKTGFP. A helical membrane pass occupies residues 36 to 55; the sequence is KSYAIAGAGVAYLFIIFINV. Residues 56–57 lie on the Lumenal side of the membrane; it reads GG. A helical membrane pass occupies residues 58–78; the sequence is VGEILSNFLGFVLPCYYSLHA. Residues 79–88 lie on the Cytoplasmic side of the membrane; the sequence is IKTTTTADDT. Residues 89-105 form a helical membrane-spanning segment; sequence ELLTYWIVFAFFSVIEF. The Lumenal portion of the chain corresponds to 106–108; the sequence is WSK. Residues 109–127 form a helical membrane-spanning segment; sequence AILYWVPFYWFFKTIFLIF. Residues 128–188 are Cytoplasmic-facing; the sequence is IALPQLGGAS…TGAASHQSSD (61 aa). The tract at residues 163–188 is disordered; the sequence is ISSKMEQAAKGASARATGAASHQSSD. Over residues 170-188 the composition is skewed to low complexity; that stretch reads AAKGASARATGAASHQSSD.

It belongs to the DP1 family. Oligomer.

The protein localises to the endoplasmic reticulum membrane. It is found in the golgi apparatus membrane. Its function is as follows. Required to generate and maintain the structure of the tubular endoplasmic reticulum network and the vacuole. Induces high curvature in membranes and causes membrane tubule formation. Involved in membrane/vesicle trafficking. In Eremothecium gossypii (strain ATCC 10895 / CBS 109.51 / FGSC 9923 / NRRL Y-1056) (Yeast), this protein is Protein YOP1 (YOP1).